The sequence spans 1234 residues: DNA-directed RNA polymerase subunit beta (1234 aa).

The disordered stretch occupies residues V1189–D1212. The span at N1195 to D1212 shows a compositional bias: acidic residues.

Belongs to the RNA polymerase beta chain family. In terms of assembly, the RNAP catalytic core consists of 2 alpha, 1 beta, 1 beta' and 1 omega subunit. When a sigma factor is associated with the core the holoenzyme is formed, which can initiate transcription.

It carries out the reaction RNA(n) + a ribonucleoside 5'-triphosphate = RNA(n+1) + diphosphate. Functionally, DNA-dependent RNA polymerase catalyzes the transcription of DNA into RNA using the four ribonucleoside triphosphates as substrates. The chain is DNA-directed RNA polymerase subunit beta from Clostridium kluyveri (strain NBRC 12016).